The sequence spans 152 residues: Succinate dehydrogenase [ubiquinone] cytochrome b small subunit A, mitochondrial (152 aa).

A mitochondrion-targeting transit peptide spans M1–S21. Residues L22–S56 lie on the Mitochondrial matrix side of the membrane. The helical transmembrane segment at L57–L78 threads the bilayer. The Mitochondrial intermembrane segment spans residues Y79–A83. The chain crosses the membrane as a helical span at residues V84–V104. A heme b-binding site is contributed by H95. Residues T105–K113 are Mitochondrial matrix-facing. Y107 contacts a ubiquinone. The chain crosses the membrane as a helical span at residues I114–F135. Residues N136–L152 are Mitochondrial intermembrane-facing.

This sequence belongs to the CybS family. Component of complex II composed of four subunits: the flavoprotein (FP) SDHA, iron-sulfur protein (IP) SDHB, and a cytochrome b560 composed of SDHC and SDHD.

The protein resides in the mitochondrion inner membrane. It functions in the pathway carbohydrate metabolism; tricarboxylic acid cycle. In terms of biological role, membrane-anchoring subunit of succinate dehydrogenase (SDH) that is involved in complex II of the mitochondrial electron transport chain and is responsible for transferring electrons from succinate to ubiquinone (coenzyme Q). SDH also oxidizes malate to the non-canonical enol form of oxaloacetate, enol-oxaloacetate. Enol-oxaloacetate, which is a potent inhibitor of the succinate dehydrogenase activity, is further isomerized into keto-oxaloacetate. This is Succinate dehydrogenase [ubiquinone] cytochrome b small subunit A, mitochondrial (sdhd-a) from Xenopus laevis (African clawed frog).